A 341-amino-acid polypeptide reads, in one-letter code: Protein pelota homolog (341 aa).

The protein belongs to the eukaryotic release factor 1 family. Pelota subfamily. Monomer. It depends on a divalent metal cation as a cofactor.

It is found in the cytoplasm. May function in recognizing stalled ribosomes, interact with stem-loop structures in stalled mRNA molecules, and effect endonucleolytic cleavage of the mRNA. May play a role in the release non-functional ribosomes and degradation of damaged mRNAs. Has endoribonuclease activity. This Methanoculleus marisnigri (strain ATCC 35101 / DSM 1498 / JR1) protein is Protein pelota homolog.